A 492-amino-acid chain; its full sequence is MSLKSERRGIHVDQSELLCKKGCGYYGNPAWQGFCSKCWREEYHKARQKQIQEDWELAERLQREEEEAFASSQSSQGAQSLTFSKFEEKKTNEKTRKVTTVKKFFSASSRVGAKKAEIQEAKAPSPSINRQTSIETDRVSKEFIEFLKTFHKTGQEIYKQTKLFLEAMHYKRDLSIEEQSECTQDFYQNVAERMQTRGKVPPERVEKIMDQIEKYIMTRLYKYVFCPETTDDEKKDLAIQKRIRALHWVTPQMLCVPVNEEIPEVSDMVVKAITDIIEMDSKRVPRDKLACITKCSKHIFNAIKITKNEPASADDFLPTLIYIVLKGNPPRLQSNIQYITRFCNPSRLMTGEDGYYFTNLCCAVAFIEKLDAQSLNLSQEDFDRYMSGQTSPRKQESENWSPDACLGVKQMYKNLDLLSQLNERQERIMNEAKKLEKDLIDWTDGIAKEVQDIVEKYPLEIRPPNQSVAAIDSENVENDKLPPPLQPQVYAG.

The interval 1-74 (MSLKSERRGI…EEEAFASSQS (74 aa)) is interaction with ubiquitinated proteins. The A20-type zinc-finger motif lies at 13 to 47 (DQSELLCKKGCGYYGNPAWQGFCSKCWREEYHKAR). Zn(2+) contacts are provided by Cys19, Cys23, Cys35, and Cys38. The disordered stretch occupies residues 66-85 (EEAFASSQSSQGAQSLTFSK). Low complexity predominate over residues 69 to 84 (FASSQSSQGAQSLTFS). Ser125 and Ser133 each carry phosphoserine. Lys152 and Lys171 each carry N6-acetyllysine. The VPS9 domain occupies 233–376 (EKKDLAIQKR…IEKLDAQSLN (144 aa)). Phosphoserine is present on residues Ser374, Ser378, Ser391, and Ser401. The stretch at 408–449 (VKQMYKNLDLLSQLNERQERIMNEAKKLEKDLIDWTDGIAKE) forms a coiled coil. Positions 471–492 (IDSENVENDKLPPPLQPQVYAG) are disordered.

In terms of assembly, heterodimer with RABEP1. The heterodimer binds RAB4A and RAB5A that have been activated by GTP-binding. Binds TSC2, GGA1, GGA2, GGA3, AP1G1 and AP1G2. Interacts with RAB21, and with 100-fold lower affinity also with RAB22. Interacts with ubiquitinated EGFR. Interacts with RGS14; the interaction is GTP-dependent. Monoubiquitinated. Detected in brain.

Its subcellular location is the cytoplasm. The protein localises to the early endosome. It localises to the recycling endosome. Functionally, rab effector protein acting as linker between gamma-adaptin and RAB5A. Involved in endocytic membrane fusion and membrane trafficking of recycling endosomes. Stimulates nucleotide exchange on RAB5A. Can act as a ubiquitin ligase. The protein is Rab5 GDP/GTP exchange factor (RABGEF1) of Bos taurus (Bovine).